The following is a 61-amino-acid chain: Odorranain-A6 (61 aa).

The N-terminal stretch at 1-22 (MFSMKKSLLLLFFLGTISLSLC) is a signal peptide. The propeptide occupies 23–45 (EQERDAEEEEGSENGAEDIKINR).

This sequence belongs to the frog skin active peptide (FSAP) family. Brevinin subfamily. Expressed by the skin glands.

Its subcellular location is the secreted. The chain is Odorranain-A6 from Odorrana hainanensis (Odor frog).